Reading from the N-terminus, the 143-residue chain is Nucleoside diphosphate kinase (143 aa).

6 residues coordinate ATP: K11, F59, R87, T93, R104, and N114. Residue H117 is the Pros-phosphohistidine intermediate of the active site.

It belongs to the NDK family. As to quaternary structure, homotetramer. It depends on Mg(2+) as a cofactor.

The protein localises to the cytoplasm. It catalyses the reaction a 2'-deoxyribonucleoside 5'-diphosphate + ATP = a 2'-deoxyribonucleoside 5'-triphosphate + ADP. The enzyme catalyses a ribonucleoside 5'-diphosphate + ATP = a ribonucleoside 5'-triphosphate + ADP. Its function is as follows. Major role in the synthesis of nucleoside triphosphates other than ATP. The ATP gamma phosphate is transferred to the NDP beta phosphate via a ping-pong mechanism, using a phosphorylated active-site intermediate. The polypeptide is Nucleoside diphosphate kinase (Psychrobacter cryohalolentis (strain ATCC BAA-1226 / DSM 17306 / VKM B-2378 / K5)).